The sequence spans 285 residues: tRNA (cytidine(32)/guanosine(34)-2'-O)-methyltransferase (285 aa).

S-adenosyl-L-methionine is bound by residues G53, W55, D83, D99, and D124. The active-site Proton acceptor is K164.

The protein belongs to the class I-like SAM-binding methyltransferase superfamily. RNA methyltransferase RlmE family. TRM7 subfamily.

The protein localises to the cytoplasm. It carries out the reaction cytidine(32)/guanosine(34) in tRNA + 2 S-adenosyl-L-methionine = 2'-O-methylcytidine(32)/2'-O-methylguanosine(34) in tRNA + 2 S-adenosyl-L-homocysteine + 2 H(+). In terms of biological role, methylates the 2'-O-ribose of nucleotides at positions 32 and 34 of the tRNA anticodon loop of substrate tRNAs. Requires trm732 for methylation of the cytidine at position 32 of the anticodon loop of substrate tRNAs. Requires trm734 for methylation of the nucleotide at position 34 of the anticodon loop of substrate tRNAs. Methylates tRNA(Phe). This is tRNA (cytidine(32)/guanosine(34)-2'-O)-methyltransferase from Schizosaccharomyces pombe (strain 972 / ATCC 24843) (Fission yeast).